A 236-amino-acid chain; its full sequence is Small ribosomal subunit protein uS2c (236 aa).

This sequence belongs to the universal ribosomal protein uS2 family.

The protein resides in the plastid. The protein localises to the chloroplast. This chain is Small ribosomal subunit protein uS2c (rps2), found in Gossypium barbadense (Sea Island cotton).